The chain runs to 713 residues: KNR4/SMI1 homolog (713 aa).

4 disordered regions span residues 18 to 129 (PDRY…VTRD), 255 to 274 (IFINPNAGSPNSSTPGSPVA), 400 to 457 (RHQM…SKPA), and 500 to 713 (EPLE…KGKK). Over residues 22–34 (ASQQRSSKASQSA) the composition is skewed to low complexity. A compositionally biased stretch (polar residues) spans 35-65 (GANSQNRPLYNNDDNQSEMYQASSSYTGGYT). Low complexity-rich tracts occupy residues 66–81 (NSPSASSSNLAGGAAA) and 88–103 (SSRNNSTTNFSASSTS). Over residues 260–270 (NAGSPNSSTPG) the composition is skewed to polar residues. Over residues 400–412 (RHQMQRREHERRQ) the composition is skewed to basic and acidic residues. Positions 413 to 429 (AAAAAQQQQQQQQHHAQ) are enriched in low complexity. Composition is skewed to basic and acidic residues over residues 507 to 605 (EIKG…EEQK) and 613 to 662 (AKAE…KIDE). The segment covering 663-686 (ENGNAEEADEEADDDDEDDEEEGD) has biased composition (acidic residues). Positions 701 to 713 (SKSKKKNKKKGKK) are enriched in basic residues.

This sequence belongs to the KNR4/SMI1 family.

The protein is KNR4/SMI1 homolog of Yarrowia lipolytica (strain CLIB 122 / E 150) (Yeast).